The sequence spans 687 residues: uncharacterized protein (687 aa).

14 consecutive transmembrane segments (helical) span residues 28–48 (IIFT…TIVV), 66–86 (WAVT…GKLG), 94–114 (VLLG…LSQT), 126–146 (GVGA…VVPL), 154–174 (GVLG…GGWL), 182–202 (WAFW…ATAV), 211–231 (PVID…LIMA), 243–263 (SATI…FVWL), 287–307 (VLSF…PIYL), 320–340 (LRTL…GVLV), 348–368 (IFPV…SQMD), 378–398 (LYLV…VLIV), 414–434 (VTFF…ALFV), and 480–500 (LTQV…LALL).

This sequence belongs to the major facilitator superfamily. TCR/Tet family.

The protein resides in the cell membrane. This is an uncharacterized protein from Mycobacterium tuberculosis (strain CDC 1551 / Oshkosh).